The sequence spans 107 residues: Heme-degrading monooxygenase (107 aa).

One can recognise an ABM domain in the interval 2–93; the sequence is VIVANKTLIR…DYILGNEIEF (92 aa). Asn6 is a Fe cation binding site. Heme is bound at residue His76.

This sequence belongs to the antibiotic biosynthesis monooxygenase family. Heme-degrading monooxygenase IsdG subfamily. In terms of assembly, homodimer.

It is found in the cytoplasm. It catalyses the reaction heme b + 3 reduced [NADPH--hemoprotein reductase] + 3 O2 = biliverdin IXalpha + CO + Fe(2+) + 3 oxidized [NADPH--hemoprotein reductase] + 3 H2O + H(+). Functionally, allows bacterial pathogens to use the host heme as an iron source. Catalyzes the oxidative degradation of the heme macrocyclic porphyrin ring to the biliverdin in the presence of a suitable electron donor such as ascorbate or NADPH--cytochrome P450 reductase, with subsequent release of free iron. This is Heme-degrading monooxygenase from Shouchella clausii (strain KSM-K16) (Alkalihalobacillus clausii).